The chain runs to 711 residues: Polyribonucleotide nucleotidyltransferase (711 aa).

Asp-486 and Asp-492 together coordinate Mg(2+). A KH domain is found at 553–612 (PRIHTIKINPDKIKDVIGKGGSVIRALTEETGTTIEIEDDGTVKIAATDGEKAKHAIRRI). In terms of domain architecture, S1 motif spans 622 to 690 (GRVYTGKVTR…RQGRIRLSIK (69 aa)). Positions 689 to 711 (IKEATEQSQPAAAPEAPAAEQGE) are disordered. The span at 694–711 (EQSQPAAAPEAPAAEQGE) shows a compositional bias: low complexity.

Belongs to the polyribonucleotide nucleotidyltransferase family. As to quaternary structure, component of the RNA degradosome, which is a multiprotein complex involved in RNA processing and mRNA degradation. Mg(2+) serves as cofactor.

It is found in the cytoplasm. The enzyme catalyses RNA(n+1) + phosphate = RNA(n) + a ribonucleoside 5'-diphosphate. Functionally, involved in mRNA degradation. Catalyzes the phosphorolysis of single-stranded polyribonucleotides processively in the 3'- to 5'-direction. This Shigella boydii serotype 4 (strain Sb227) protein is Polyribonucleotide nucleotidyltransferase.